We begin with the raw amino-acid sequence, 398 residues long: MLLEHPGSSCQNAGNYTRYSSSQDIPVCAGCNQHIVDRFILKVLDRHWHSKCLKCSDCQSQLADKCFSRGDSVYCKDDFFKRFGTKCAACQQGIPPTQVVRRAQDFVYHLHCFACIVCKRQLATGDEYYLMEDSRLVCKADYETAKQREADSTAKRPRTTITAKQLETLKNAYNNSPKPARHVREQLSTETGLDMRVVQVWFQNRRAKEKRLKKDAGRQRWGQYFRNMKRSRGTSKSDKDSTQEDGMDSDAEVSFTDEPPMSDLGHSNGIYSSLSESSPALSRQGGNHPAFPLEHGAIIPSQEPYHDIQASSPYSLPQSPGPLQPLPRHQPLISSLVYPESGLPMAGQSGGQDMTPGVRMMAAGNGPSSDLSTGSSGGYPDFPASPASWLDEVDHAQF.

2 consecutive LIM zinc-binding domains span residues 28–78 and 87–141; these read CAGC…CKDD and CAAC…CKAD. The homeobox DNA-binding region spans 154 to 213; sequence AKRPRTTITAKQLETLKNAYNNSPKPARHVREQLSTETGLDMRVVQVWFQNRRAKEKRLK. Disordered stretches follow at residues 208–294 and 307–398; these read KEKR…FPLE and DIQA…HAQF. Low complexity predominate over residues 272-282; sequence SSLSESSPALS.

Its subcellular location is the nucleus. Transcription factor. This is LIM/homeobox protein Lhx3 (lhx3) from Danio rerio (Zebrafish).